The sequence spans 430 residues: MGKPDIYNSSANVEKSPYYKAMQHRAPNVLTAVDKKAHGMRRRILSQGLSDSSTRAFGNTIKKHIERLCQKIEGHSDPNTQWSESYDMARWFSYLTFDIMADVVFGQPYNLLGNSEYRYVVDSIEGSNIRTGVLIQAPEAYTWRLDKRLFPASIRHRNTFVKFISSLVQERLTTKPLERDDIISHLLTAKDSETGQGFTKNEVAAESSTLIVAGTDTSSTALAATLFYLTQYPNMYRRAVAEVRSSFAKSQDVKLGRALNECVFTRACIEESMRLSPPAASALWRRVQVGGQTVDGHAIQAGCNIGVCIYAIHHNELYYPDPFVFNPDRWLQNDKQAQSAFSPFSVGPRSCIGKGFAMAELMLAVATILVKFDIRRAPGDQGCIGQGHLEGEDGRRMVDEYQLHDHVTAFKQGPVLQFRRRDTVVQSEAE.

Cys-351 is a binding site for heme.

It belongs to the cytochrome P450 family. Requires heme as cofactor.

It functions in the pathway mycotoxin biosynthesis. Cytochrome P450 monooxygenase; part of the gene cluster that mediates the biosynthesis of gramillins A and B, bicyclic lipopeptides that induce cell death in maize leaves but not in wheat leaves. The nonribosomal peptide synthetase GRA1 incorporates respectively a glutamic adic (Glu), a leucine (Leu), a serine (Ser), a hydroxyglutamine (HOGln), a 2-amino decanoic acid, and 2 cysteins (CysB and CysA). The biosynthesis of 2-amino decanoic acid incorporated in gramillins could be initiated by a fatty acid synthase composed of the alpha and beta subunits FGSG_00036 and FGSG_11656. The cytochrome P450 monooxygenase FGSG_15680 could hydroxylate the fatty acid chain. Subsequent oxidation to the ketone by the oxidoreductase FGSG_00048 and transamination by aminotransferase FGSG_00049 could form 2-amino-decanoic acid. On the other hand, FGSG_15680 could also be responsible for the HO-modified glutamine at the gamma-position. Whether hydroxylation occurs on the fully assembled product or on the Gln residue prior to assembly into the gramillins requires further proof. The thioredoxin FGSG_00043 could also be required for the disulfide-bond formation between CysA and CysB. The specific involvement of the remaining proteins from the cluster is more difficult to discern, but could have broader regulatory (FGSG_00040 and FGSG_11657) or enzymatic functions (FGSG_00044 and FGSG_00045). The final C-domain of GRA1 does not possess the expected sequence of a termination CT domain, often implicated in macrocyclization and release of a cyclopeptidein fungal NRPs; and the thioesterase FGSG_00047 may act in concert with the terminal C-domain of GRA1 to catalyze the formation of the macrocyclic anhydride and release of the products. The chain is Cytochrome P450 monooxygenase FGSG_15680 from Gibberella zeae (strain ATCC MYA-4620 / CBS 123657 / FGSC 9075 / NRRL 31084 / PH-1) (Wheat head blight fungus).